The chain runs to 947 residues: Serine/threonine-protein kinase PKH2 (947 aa).

The segment covering 1–14 (MHKFRYSLHQHYSK) has biased composition (basic residues). 3 disordered regions span residues 1–43 (MHKF…SSSS), 108–132 (SLGN…LSSH), and 162–212 (FNHL…NEEN). A compositionally biased stretch (polar residues) spans 108-117 (SLGNTTNETG). A compositionally biased stretch (acidic residues) spans 187–198 (NTEEEENNDDTD). Positions 199–212 (EIPKSETLKQNEEN) are enriched in basic and acidic residues. Residues 240-502 (FKFGKELGEG…IPEIQKHYFF (263 aa)) enclose the Protein kinase domain. ATP is bound by residues 250-252 (SYS) and lysine 269. The tract at residues 271–316 (LDKRHIIKEKKVKYVNIEKHALNRLSNRLGVISLYFTFQDKDSLYF) is PIF-pocket. ATP contacts are provided by residues 319–321 (DYA) and glutamate 325. Catalysis depends on aspartate 364, which acts as the Proton acceptor. ATP-binding residues include glutamate 368 and aspartate 382. 2 stretches are compositionally biased toward low complexity: residues 550–579 (VKKS…KGSS) and 618–632 (SSTS…SNSN). Disordered regions lie at residues 550 to 598 (VKKS…STEK), 611 to 644 (KPAT…QQDY), 660 to 686 (SVGS…IHQQ), and 794 to 816 (NMKR…ASTS). Residues 802–811 (DSKKSMDIER) are compositionally biased toward basic and acidic residues.

This sequence belongs to the protein kinase superfamily. AGC Ser/Thr protein kinase family. PDPK1 subfamily.

It is found in the nucleus. It localises to the cytoplasm. The protein resides in the cell cortex. It carries out the reaction L-seryl-[protein] + ATP = O-phospho-L-seryl-[protein] + ADP + H(+). The catalysed reaction is L-threonyl-[protein] + ATP = O-phospho-L-threonyl-[protein] + ADP + H(+). In terms of biological role, serine/threonine-protein kinase which is part sphingolipid-mediated signaling pathway that is required for the internalization step of endocytosis by regulating eisosome assembly and organization, and modulating the organization of the plasma membrane. Phosphorylates and activates PKC1. Activates YPK1 and YPK2, 2 components of signaling cascade required for maintenance of cell wall integrity. Required for stress-induced P-body assembly and regulates global mRNA decay at the deadenylation step. This chain is Serine/threonine-protein kinase PKH2, found in Candida albicans (strain SC5314 / ATCC MYA-2876) (Yeast).